We begin with the raw amino-acid sequence, 335 residues long: Prepilin leader peptidase/N-methyltransferase (335 aa).

A helical transmembrane segment spans residues 13 to 33; it reads LFAVFLFVLGLCVGSFLNVVI. Zn(2+)-binding residues include cysteine 49, cysteine 52, cysteine 74, and cysteine 77. The next 5 helical transmembrane spans lie at 105–125, 131–151, 206–226, 258–278, and 299–319; these read WTYE…LAFI, ILPL…AFPL, LLGV…LMLL, PGLP…VQPI, and IPFG…GPWL.

It belongs to the peptidase A24 family. Requires Zn(2+) as cofactor.

Its subcellular location is the cell inner membrane. The enzyme catalyses Typically cleaves a -Gly-|-Phe- bond to release an N-terminal, basic peptide of 5-8 residues from type IV prepilin, and then N-methylates the new N-terminal amino group, the methyl donor being S-adenosyl-L-methionine.. Plays an essential role in type IV pili and type II pseudopili formation by proteolytically removing the leader sequence from substrate proteins and subsequently monomethylating the alpha-amino group of the newly exposed N-terminal phenylalanine. The protein is Prepilin leader peptidase/N-methyltransferase (pilD) of Myxococcus xanthus (strain DK1622).